We begin with the raw amino-acid sequence, 126 residues long: Tachykinin-3 (126 aa).

Positions 1 to 20 (MRSTLLFAVILALSSARSLG) are cleaved as a signal peptide. Residues 21 to 83 (AVCEESQEQV…VGPKESPLPQ (63 aa)) constitute a propeptide that is removed on maturation. Position 95 is a methionine amide (M95). Residues 99–126 (NLQPDTPVDINQENIPSFGTFKYPPSVE) constitute a propeptide that is removed on maturation. Residues 102–126 (PDTPVDINQENIPSFGTFKYPPSVE) form a disordered region.

The protein belongs to the tachykinin family.

Its subcellular location is the secreted. Its function is as follows. Tachykinins are active peptides which excite neurons, evoke behavioral responses, are potent vasodilators and secretagogues, and contract (directly or indirectly) many smooth muscles. Is a critical central regulator of gonadal function. This chain is Tachykinin-3 (TAC3), found in Bos taurus (Bovine).